The sequence spans 36 residues: TVIDVKCTSPKQCLPPCKEIYGRHAGAKCMNGKCKC.

Disulfide bonds link Cys-7-Cys-29, Cys-13-Cys-34, and Cys-17-Cys-36.

Belongs to the short scorpion toxin superfamily. Potassium channel inhibitor family. Alpha-KTx 02 subfamily. In terms of tissue distribution, expressed by the venom gland.

It localises to the secreted. Its function is as follows. Inhibitor of voltage-gated potassium channels (Kv). This protein is capable of displacing the binding of radio-labeled noxiustoxin (AC P08815) to rat brain synaptosomes with high affinity (about 100 pM). It is also capable of inhibiting transient potassium-currents (resembling I(A)-type currents), in cultured rat cerebellar granule cells. About 50% of the peak currents are reduced by application of a 1.5 uM solution of this toxin. Is lethal to mice (when less than 100 ug are injected). The polypeptide is Potassium channel toxin alpha-KTx 2.7 (Centruroides limpidus (Mexican scorpion)).